The chain runs to 334 residues: GTPase Obg (334 aa).

An Obg domain is found at 1–159 (MKFIDQAIIH…RDIQLELMLL (159 aa)). The interval 67 to 86 (AQNGQNGSSRKSSGKKGDDI) is disordered. Residues 68 to 77 (QNGQNGSSRK) are compositionally biased toward low complexity. Residues 160–333 (ADVGTLGMPN…LCSDITKYLK (174 aa)) enclose the OBG-type G domain. Residues 166–173 (GMPNVGKS), 191–195 (FTTLH), 213–216 (DIPG), 283–286 (NKID), and 314–316 (SSM) contribute to the GTP site. Mg(2+) contacts are provided by S173 and T193.

It belongs to the TRAFAC class OBG-HflX-like GTPase superfamily. OBG GTPase family. Monomer. It depends on Mg(2+) as a cofactor.

It is found in the cytoplasm. Functionally, an essential GTPase which binds GTP, GDP and possibly (p)ppGpp with moderate affinity, with high nucleotide exchange rates and a fairly low GTP hydrolysis rate. Plays a role in control of the cell cycle, stress response, ribosome biogenesis and in those bacteria that undergo differentiation, in morphogenesis control. The polypeptide is GTPase Obg (Buchnera aphidicola subsp. Acyrthosiphon pisum (strain 5A)).